The chain runs to 259 residues: Proteasome subunit beta type-4 (259 aa).

This sequence belongs to the peptidase T1B family. The 26S proteasome consists of a 20S proteasome core and two 19S regulatory subunits. The 20S proteasome core is composed of 28 subunits that are arranged in four stacked rings, resulting in a barrel-shaped structure. The two end rings are each formed by seven alpha subunits, and the two central rings are each formed by seven beta subunits. The catalytic chamber with the active sites is on the inside of the barrel.

It is found in the cytoplasm. It localises to the nucleus. Its function is as follows. Non-catalytic component of the proteasome, a multicatalytic proteinase complex which is characterized by its ability to cleave peptides with Arg, Phe, Tyr, Leu, and Glu adjacent to the leaving group at neutral or slightly basic pH. The proteasome has an ATP-dependent proteolytic activity. The chain is Proteasome subunit beta type-4 (psmB4-1) from Dictyostelium discoideum (Social amoeba).